The following is a 153-amino-acid chain: Large-conductance mechanosensitive channel (153 aa).

The next 2 membrane-spanning stretches (helical) occupy residues 16–36 and 88–108; these read VIDL…VKSL and GLFI…FMLV.

Belongs to the MscL family. As to quaternary structure, homopentamer.

The protein resides in the cell inner membrane. In terms of biological role, channel that opens in response to stretch forces in the membrane lipid bilayer. May participate in the regulation of osmotic pressure changes within the cell. This is Large-conductance mechanosensitive channel from Chromobacterium violaceum (strain ATCC 12472 / DSM 30191 / JCM 1249 / CCUG 213 / NBRC 12614 / NCIMB 9131 / NCTC 9757 / MK).